The sequence spans 671 residues: DNA ligase (671 aa).

Residues 32 to 36, 81 to 82, and glutamate 113 contribute to the NAD(+) site; these read DAEYD and SL. The active-site N6-AMP-lysine intermediate is the lysine 115. NAD(+) contacts are provided by arginine 136, glutamate 173, lysine 290, and lysine 314. Residues cysteine 408, cysteine 411, cysteine 426, and cysteine 432 each coordinate Zn(2+). Positions 593 to 671 constitute a BRCT domain; that stretch reads EIDSPFAGKT…EAEMIRLLGA (79 aa).

This sequence belongs to the NAD-dependent DNA ligase family. LigA subfamily. It depends on Mg(2+) as a cofactor. Mn(2+) is required as a cofactor.

It carries out the reaction NAD(+) + (deoxyribonucleotide)n-3'-hydroxyl + 5'-phospho-(deoxyribonucleotide)m = (deoxyribonucleotide)n+m + AMP + beta-nicotinamide D-nucleotide.. In terms of biological role, DNA ligase that catalyzes the formation of phosphodiester linkages between 5'-phosphoryl and 3'-hydroxyl groups in double-stranded DNA using NAD as a coenzyme and as the energy source for the reaction. It is essential for DNA replication and repair of damaged DNA. This Salmonella dublin (strain CT_02021853) protein is DNA ligase.